The following is a 381-amino-acid chain: 40-kDa huntingtin-associated protein (381 aa).

A2 bears the N-acetylalanine mark. A Nuclear localization signal motif is present at residues 34 to 36 (KKR). Residues 221-265 (QLELLPQPPSGPQPPLSGPQPRPVLGSTLPLPQPPDHAPGSVAPS) are disordered. Over residues 226–242 (PQPPSGPQPPLSGPQPR) the composition is skewed to pro residues.

In terms of assembly, interacts with HTT (via C-terminus). Interacts with RAB5A. Found in a complex with F8A1/F8A2/F8A3, HTT and RAB5A; mediates the recruitment of HTT by RAB5A onto early endosomes. Produced abundantly in a wide variety of cell types.

Its subcellular location is the cytoplasm. It is found in the nucleus. The protein resides in the early endosome. It localises to the nuclear body. RAB5A effector molecule that is involved in vesicular trafficking of early endosomes. Mediates the recruitment of HTT by RAB5A onto early endosomes. The HTT-F8A1/F8A2/F8A3-RAB5A complex stimulates early endosomal interaction with actin filaments and inhibits interaction with microtubules, leading to the reduction of endosome motility. This is 40-kDa huntingtin-associated protein (F8a1) from Mus musculus (Mouse).